Consider the following 461-residue polypeptide: Squalene synthase BSS (461 aa).

NADP(+) contacts are provided by R51 and R76. Residues D79, E82, and D83 each contribute to the Mg(2+) site. Residues R219, K322, and R324 each coordinate NADP(+). Residues 430–450 (VTQHWWSILIFLISIAVFFIP) form a helical membrane-spanning segment.

It belongs to the phytoene/squalene synthase family. The cofactor is Mg(2+).

It is found in the endoplasmic reticulum membrane. It carries out the reaction 2 (2E,6E)-farnesyl diphosphate + NADPH + H(+) = squalene + 2 diphosphate + NADP(+). The catalysed reaction is 2 (2E,6E)-farnesyl diphosphate + NADH + H(+) = squalene + 2 diphosphate + NAD(+). Functionally, converts farnesyl diphosphate (FPP) into squalene, a precursor for sterol biosynthesis in eukaryotes. Does not possess botryococcene synthase activity. The protein is Squalene synthase BSS of Botryococcus braunii (Green alga).